Reading from the N-terminus, the 901-residue chain is Protein translocase subunit SecA (901 aa).

ATP is bound by residues Q87, 105–109 (GEGKT), and D512. Residues C885, C887, C896, and H897 each coordinate Zn(2+).

The protein belongs to the SecA family. In terms of assembly, monomer and homodimer. Part of the essential Sec protein translocation apparatus which comprises SecA, SecYEG and auxiliary proteins SecDF-YajC and YidC. Requires Zn(2+) as cofactor.

The protein resides in the cell inner membrane. It is found in the cytoplasm. The enzyme catalyses ATP + H2O + cellular proteinSide 1 = ADP + phosphate + cellular proteinSide 2.. Its function is as follows. Part of the Sec protein translocase complex. Interacts with the SecYEG preprotein conducting channel. Has a central role in coupling the hydrolysis of ATP to the transfer of proteins into and across the cell membrane, serving both as a receptor for the preprotein-SecB complex and as an ATP-driven molecular motor driving the stepwise translocation of polypeptide chains across the membrane. This chain is Protein translocase subunit SecA, found in Salmonella arizonae (strain ATCC BAA-731 / CDC346-86 / RSK2980).